Here is a 193-residue protein sequence, read N- to C-terminus: Hypoxanthine/guanine phosphoribosyltransferase (193 aa).

Belongs to the purine/pyrimidine phosphoribosyltransferase family. Archaeal HPRT subfamily. As to quaternary structure, homodimer.

Its subcellular location is the cytoplasm. The catalysed reaction is IMP + diphosphate = hypoxanthine + 5-phospho-alpha-D-ribose 1-diphosphate. It catalyses the reaction GMP + diphosphate = guanine + 5-phospho-alpha-D-ribose 1-diphosphate. It participates in purine metabolism; IMP biosynthesis via salvage pathway; IMP from hypoxanthine: step 1/1. Catalyzes a salvage reaction resulting in the formation of IMP that is energically less costly than de novo synthesis. Prefers hypoxanthine, has 66% activity with guanine while activity with adenine, xanthine, uracil, orotate, or cytosine is negligible. This chain is Hypoxanthine/guanine phosphoribosyltransferase, found in Methanothermobacter marburgensis (strain ATCC BAA-927 / DSM 2133 / JCM 14651 / NBRC 100331 / OCM 82 / Marburg) (Methanobacterium thermoautotrophicum).